Here is a 562-residue protein sequence, read N- to C-terminus: Gut esterase 1 (562 aa).

Residues 1–16 (MRIFLVSVILINACWA) form the signal peptide. N-linked (GlcNAc...) asparagine; atypical glycosylation occurs at asparagine 73. The cysteines at positions 75 and 93 are disulfide-linked. The Acyl-ester intermediate role is filled by serine 198. Cysteines 250 and 258 form a disulfide. Active-site charge relay system residues include glutamate 319 and histidine 452. Residues 559 to 562 (KDEL) carry the Prevents secretion from ER motif.

It belongs to the type-B carboxylesterase/lipase family. Expressed only in the intestine.

The protein resides in the endoplasmic reticulum lumen. It catalyses the reaction a carboxylic ester + H2O = an alcohol + a carboxylate + H(+). This is Gut esterase 1 (ges-1) from Caenorhabditis elegans.